We begin with the raw amino-acid sequence, 396 residues long: uncharacterized protein (396 aa).

11 helical membrane-spanning segments follow: residues 7–27 (SDDVWVLWGFIAVWAAVSIGL), 36–56 (AVSGAIIALAGAMVFTNVGVL), 62–82 (VYDTVWSYVVPLAIPLLLFQI), 94–114 (LLFIFLISSVGTVLGSILAFF), 159–179 (VVADNFMMALLFFILISIPAL), 218–238 (IAFNAGAAFALVAVSMKVSGY), 250–270 (GTLGDQYLVLTSLTVLIIFLF), 285–305 (TFLIYLFFVVIGIPADLRLIV), 310–330 (LILLFVFIIAISNLAVSLAAG), 340–360 (ILLAVNATVGGPTTAAAMAIA), and 367–387 (VAPIMLVGTLGYLIGNYVGTF).

The protein resides in the cell membrane. This is an uncharacterized protein from Bacillus subtilis (strain 168).